The primary structure comprises 533 residues: MNLGHWNFLLALISLQTFFNASAQISTVNNSSKGSNNSNIFHEDTFNSTSIDVLDASIHSTLVVPQTYSTEAATISGARFATSVPVQSPVDNPLDPADCSQREKYRKQPVATPSSRLRKCCPHGENLNIYRENQSDSMCDNGLLSFEPTIISAVLFDNCIEDLEVETTLDYDIGNPCNSSLLYDDKDDVFFVLQDGSLLIIDKFGNESYTVKEHYCLDIDKSGHLFAFTCVTQVEEQIAFAKVVFVAVLMLISMPCLLLVSYLHMTLRLLRNLHGLSLSLMSLCLASGYFVHSVVHIYGIPNQGFIGYVIQFCILSYFFWYLCICFNVLLNVWYKLPCCIQCSKSWATFNFACYAVFAFSGPATIVALTVQKGLPGMPSYFLQGLTESIRDSQRYFIPPVSTILFLSFLLNIISFFGFQRISGYAKAEKNIQERKCLFDQQKYEDVKKDAKCVSLLGIIMVVSWLLEIITFYSGSNSNYLILCDMVNGLQGVWVLLIFLVVRRRRTIILRWWYDRGSHEIEGTELQALSNSPT.

Positions 1 to 23 are cleaved as a signal peptide; sequence MNLGHWNFLLALISLQTFFNASA. N-linked (GlcNAc...) asparagine glycosylation is found at N20, N29, N30, N36, and N47. At 24–242 the chain is on the extracellular side; that stretch reads QISTVNNSSK…QVEEQIAFAK (219 aa). The disordered stretch occupies residues 86 to 108; that stretch reads VQSPVDNPLDPADCSQREKYRKQ. C120 and C216 are disulfide-bonded. N133, N178, and N206 each carry an N-linked (GlcNAc...) asparagine glycan. A helical membrane pass occupies residues 243–263; the sequence is VVFVAVLMLISMPCLLLVSYL. Topologically, residues 264–279 are cytoplasmic; the sequence is HMTLRLLRNLHGLSLS. A helical membrane pass occupies residues 280 to 300; it reads LMSLCLASGYFVHSVVHIYGI. Over 301-303 the chain is Extracellular; that stretch reads PNQ. A helical transmembrane segment spans residues 304–324; the sequence is GFIGYVIQFCILSYFFWYLCI. Over 325–347 the chain is Cytoplasmic; it reads CFNVLLNVWYKLPCCIQCSKSWA. A helical membrane pass occupies residues 348-368; sequence TFNFACYAVFAFSGPATIVAL. Topologically, residues 369-395 are extracellular; sequence TVQKGLPGMPSYFLQGLTESIRDSQRY. The helical transmembrane segment at 396–416 threads the bilayer; the sequence is FIPPVSTILFLSFLLNIISFF. Over 417–451 the chain is Cytoplasmic; that stretch reads GFQRISGYAKAEKNIQERKCLFDQQKYEDVKKDAK. The helical transmembrane segment at 452–472 threads the bilayer; it reads CVSLLGIIMVVSWLLEIITFY. The Extracellular portion of the chain corresponds to 473–480; the sequence is SGSNSNYL. Residues 481 to 501 form a helical membrane-spanning segment; the sequence is ILCDMVNGLQGVWVLLIFLVV. Residues 502–533 are Cytoplasmic-facing; that stretch reads RRRRTIILRWWYDRGSHEIEGTELQALSNSPT.

It belongs to the G-protein coupled receptor 2 family. Mth subfamily.

The protein localises to the cell membrane. In Drosophila melanogaster (Fruit fly), this protein is Probable G-protein coupled receptor Mth-like 14 (mthl14).